Here is a 194-residue protein sequence, read N- to C-terminus: 22 kDa relaxation protein (194 aa).

In terms of biological role, this protein is probably required for relaxation complex formation. The sequence is that of 22 kDa relaxation protein from Salmonella typhimurium.